A 293-amino-acid polypeptide reads, in one-letter code: MASNVTNKMDPHSMNSRVFIGNLNTLVVKKSDVEAIFSKYGKIAGCSVHKGFAFVQYDKEKNARAAVAGEDGRMIASQVVDINLAAEPKVNRGNAGVKRSAAEMYGSSFDLDYNLQRDYYGGMYSFPARVPPPPPIALAVVPSKRQRISGNTSRRGKSGFNSKSGKRGSSKSGKLKGDDLQAIKQELTQIKQKVDSLLENLEKIEKEHCKQGVEVKNAKSEEEQTSSSSKKDKTHVKMESEGGADDSVEEGDLLCDDDNEDQGDNQLELIKDDEKGAEEGEDDRDRANGQDDS.

In terms of domain architecture, RRM spans 16–87 (SRVFIGNLNT…QVVDINLAAE (72 aa)). Disordered stretches follow at residues 140-177 (VVPSKRQRISGNTSRRGKSGFNSKSGKRGSSKSGKLKG) and 208-293 (HCKQ…QDDS). Positions 177–208 (GDDLQAIKQELTQIKQKVDSLLENLEKIEKEH) form a coiled coil. Composition is skewed to basic and acidic residues over residues 208–222 (HCKQGVEVKNAKSEE) and 229–240 (SKKDKTHVKMES). The segment covering 242–263 (GGADDSVEEGDLLCDDDNEDQG) has biased composition (acidic residues). The segment covering 269-293 (LIKDDEKGAEEGEDDRDRANGQDDS) has biased composition (basic and acidic residues).

The protein belongs to the RRM HNRPC family. RALY subfamily.

It localises to the nucleus. This Homo sapiens (Human) protein is Heterogeneous nuclear ribonucleoprotein C-like 4.